The chain runs to 564 residues: Major facilitator superfamily transporter MPN_076 (564 aa).

A run of 12 helical transmembrane segments spans residues 1 to 21, 65 to 85, 89 to 109, 176 to 196, 220 to 240, 249 to 269, 306 to 326, 358 to 378, 404 to 424, 425 to 445, 457 to 477, and 501 to 521; these read MLWA…FVID, ITLL…KFGY, VMIM…GDPL, IAGY…GTTL, NLWG…FQSV, VFIL…FAWF, MIGM…GGWW, AGLP…YMVF, IVIV…FAFV, AIAT…ILIL, VSVL…AFDI, and GAIA…AIVV.

The protein belongs to the major facilitator superfamily.

The protein resides in the cell membrane. The polypeptide is Major facilitator superfamily transporter MPN_076 (Mycoplasma pneumoniae (strain ATCC 29342 / M129 / Subtype 1) (Mycoplasmoides pneumoniae)).